The chain runs to 1034 residues: Putative beta-glucuronidase (1034 aa).

The active-site Proton donor is the Glu432. A CBM6 domain is found at 909 to 1034 (VDISAEEGVL…GPFIDELFID (126 aa)).

This sequence belongs to the glycosyl hydrolase 2 family.

Its subcellular location is the cytoplasm. The catalysed reaction is a beta-D-glucuronoside + H2O = D-glucuronate + an alcohol. Its function is as follows. Glycoside hydrolase that may be involved in ulvan degradation. Ulvan is the main polysaccharide component of the Ulvales (green seaweed) cell wall. It is composed of disaccharide building blocks comprising 3-sulfated rhamnose (Rha3S) linked to D-glucuronic acid (GlcA), L-iduronic acid (IduA), or D-xylose (Xyl). In Formosa agariphila (strain DSM 15362 / KCTC 12365 / LMG 23005 / KMM 3901 / M-2Alg 35-1), this protein is Putative beta-glucuronidase.